Reading from the N-terminus, the 294-residue chain is 4-hydroxy-tetrahydrodipicolinate synthase (294 aa).

A pyruvate-binding site is contributed by threonine 45. Tyrosine 133 serves as the catalytic Proton donor/acceptor. Catalysis depends on lysine 161, which acts as the Schiff-base intermediate with substrate. Isoleucine 203 is a binding site for pyruvate.

The protein belongs to the DapA family. As to quaternary structure, homotetramer; dimer of dimers.

It is found in the cytoplasm. It catalyses the reaction L-aspartate 4-semialdehyde + pyruvate = (2S,4S)-4-hydroxy-2,3,4,5-tetrahydrodipicolinate + H2O + H(+). It participates in amino-acid biosynthesis; L-lysine biosynthesis via DAP pathway; (S)-tetrahydrodipicolinate from L-aspartate: step 3/4. In terms of biological role, catalyzes the condensation of (S)-aspartate-beta-semialdehyde [(S)-ASA] and pyruvate to 4-hydroxy-tetrahydrodipicolinate (HTPA). The chain is 4-hydroxy-tetrahydrodipicolinate synthase from Buchnera aphidicola subsp. Schizaphis graminum (strain Sg).